The chain runs to 452 residues: Bifunctional protein GlmU (452 aa).

Residues 1–231 are pyrophosphorylase; sequence MSRTCLAVIL…EAELAGCNNR (231 aa). Residues 10-13, lysine 24, glutamine 77, 82-83, 105-107, glycine 143, glutamate 157, asparagine 172, and asparagine 229 contribute to the UDP-N-acetyl-alpha-D-glucosamine site; these read LAAG, GT, and YGD. A Mg(2+)-binding site is contributed by aspartate 107. Asparagine 229 is a Mg(2+) binding site. Positions 232-252 are linker; it reads AELAVIEKLWQERRRHELMLS. Positions 253 to 452 are N-acetyltransferase; sequence GVSMIAPETV…MAIKAFSGKV (200 aa). UDP-N-acetyl-alpha-D-glucosamine contacts are provided by arginine 318 and lysine 336. The Proton acceptor role is filled by histidine 348. The UDP-N-acetyl-alpha-D-glucosamine site is built by tyrosine 351 and asparagine 362. Acetyl-CoA is bound by residues alanine 365, 371–372, serine 390, serine 408, and arginine 425; that span reads NY.

This sequence in the N-terminal section; belongs to the N-acetylglucosamine-1-phosphate uridyltransferase family. In the C-terminal section; belongs to the transferase hexapeptide repeat family. As to quaternary structure, homotrimer. The cofactor is Mg(2+).

It is found in the cytoplasm. The enzyme catalyses alpha-D-glucosamine 1-phosphate + acetyl-CoA = N-acetyl-alpha-D-glucosamine 1-phosphate + CoA + H(+). It catalyses the reaction N-acetyl-alpha-D-glucosamine 1-phosphate + UTP + H(+) = UDP-N-acetyl-alpha-D-glucosamine + diphosphate. It participates in nucleotide-sugar biosynthesis; UDP-N-acetyl-alpha-D-glucosamine biosynthesis; N-acetyl-alpha-D-glucosamine 1-phosphate from alpha-D-glucosamine 6-phosphate (route II): step 2/2. Its pathway is nucleotide-sugar biosynthesis; UDP-N-acetyl-alpha-D-glucosamine biosynthesis; UDP-N-acetyl-alpha-D-glucosamine from N-acetyl-alpha-D-glucosamine 1-phosphate: step 1/1. The protein operates within bacterial outer membrane biogenesis; LPS lipid A biosynthesis. In terms of biological role, catalyzes the last two sequential reactions in the de novo biosynthetic pathway for UDP-N-acetylglucosamine (UDP-GlcNAc). The C-terminal domain catalyzes the transfer of acetyl group from acetyl coenzyme A to glucosamine-1-phosphate (GlcN-1-P) to produce N-acetylglucosamine-1-phosphate (GlcNAc-1-P), which is converted into UDP-GlcNAc by the transfer of uridine 5-monophosphate (from uridine 5-triphosphate), a reaction catalyzed by the N-terminal domain. The chain is Bifunctional protein GlmU from Allorhizobium ampelinum (strain ATCC BAA-846 / DSM 112012 / S4) (Agrobacterium vitis (strain S4)).